The chain runs to 160 residues: UPF0262 protein BCAN_A0255 (160 aa).

Belongs to the UPF0262 family.

This is UPF0262 protein BCAN_A0255 from Brucella canis (strain ATCC 23365 / NCTC 10854 / RM-666).